Reading from the N-terminus, the 583-residue chain is Probable phosphoglucomutase, cytoplasmic 1 (583 aa).

Positions 24 and 123 each coordinate alpha-D-glucose 1,6-bisphosphate. Ser-123 functions as the Phosphoserine intermediate in the catalytic mechanism. Positions 123, 299, 301, and 303 each coordinate Mg(2+). At Ser-123 the chain carries Phosphoserine. Asp-303, Arg-304, Thr-367, Glu-386, Ser-388, and Lys-399 together coordinate alpha-D-glucose 1,6-bisphosphate.

Belongs to the phosphohexose mutase family. Monomer. Mg(2+) serves as cofactor.

It is found in the cytoplasm. It catalyses the reaction alpha-D-glucose 1-phosphate = alpha-D-glucose 6-phosphate. The enzyme catalyses O-phospho-L-seryl-[protein] + alpha-D-glucose 1-phosphate = alpha-D-glucose 1,6-bisphosphate + L-seryl-[protein]. It carries out the reaction alpha-D-glucose 1,6-bisphosphate + L-seryl-[protein] = O-phospho-L-seryl-[protein] + alpha-D-glucose 6-phosphate. In terms of biological role, catalyzes the reversible isomerization of alpha-D-glucose 1-phosphate to alpha-D-glucose 6-phosphate. The mechanism proceeds via the intermediate compound alpha-D-glucose 1,6-bisphosphate. This enzyme participates in both the breakdown and synthesis of glucose. This chain is Probable phosphoglucomutase, cytoplasmic 1, found in Arabidopsis thaliana (Mouse-ear cress).